Here is a 445-residue protein sequence, read N- to C-terminus: Argininosuccinate synthase (445 aa).

ATP is bound by residues 17 to 25 (AFSGGLDTS) and Ala-43. Tyr-99 contributes to the L-citrulline binding site. ATP contacts are provided by Gly-129 and Thr-131. Residues Thr-131, Asn-135, and Asp-136 each contribute to the L-aspartate site. L-citrulline is bound at residue Asn-135. An ATP-binding site is contributed by Asp-136. Positions 139 and 192 each coordinate L-citrulline. ATP is bound at residue Asp-194. 3 residues coordinate L-citrulline: Thr-201, Glu-203, and Glu-280.

This sequence belongs to the argininosuccinate synthase family. Type 2 subfamily. Homotetramer.

The protein resides in the cytoplasm. It catalyses the reaction L-citrulline + L-aspartate + ATP = 2-(N(omega)-L-arginino)succinate + AMP + diphosphate + H(+). It participates in amino-acid biosynthesis; L-arginine biosynthesis; L-arginine from L-ornithine and carbamoyl phosphate: step 2/3. This is Argininosuccinate synthase from Bordetella pertussis (strain Tohama I / ATCC BAA-589 / NCTC 13251).